The following is a 441-amino-acid chain: Xaa-Pro aminopeptidase (441 aa).

Mn(2+) is bound by residues aspartate 261, aspartate 272, histidine 355, glutamate 384, and glutamate 407.

The protein belongs to the peptidase M24B family. Homotetramer. Requires Mn(2+) as cofactor.

Its subcellular location is the cytoplasm. It catalyses the reaction Release of any N-terminal amino acid, including proline, that is linked to proline, even from a dipeptide or tripeptide.. The polypeptide is Xaa-Pro aminopeptidase (pepP) (Escherichia coli (strain K12)).